The primary structure comprises 78 residues: RNA-binding protein Hfq (78 aa).

Residues Asp10–Val69 enclose the Sm domain.

Belongs to the Hfq family. As to quaternary structure, homohexamer.

Functionally, RNA chaperone that binds small regulatory RNA (sRNAs) and mRNAs to facilitate mRNA translational regulation in response to envelope stress, environmental stress and changes in metabolite concentrations. Also binds with high specificity to tRNAs. The chain is RNA-binding protein Hfq from Paraburkholderia phymatum (strain DSM 17167 / CIP 108236 / LMG 21445 / STM815) (Burkholderia phymatum).